A 415-amino-acid polypeptide reads, in one-letter code: Hydroxysteroid dehydrogenase-like protein 2 (415 aa).

Residues 17-23 (GASRGIG), Lys42, and Asp74 each bind NADP(+). The active-site Proton acceptor is the Tyr168. Lys172 lines the NADP(+) pocket. One can recognise an SCP2 domain in the interval 304–412 (AGPVSEMFNT…KLEKMMAMMK (109 aa)).

The protein belongs to the short-chain dehydrogenases/reductases (SDR) family.

The protein localises to the peroxisome. It localises to the mitochondrion. Functionally, has apparently no steroid dehydrogenase activity. Might act as a metabolic regulator that affects systemic adaptation to nutritional cues. The protein is Hydroxysteroid dehydrogenase-like protein 2 (hsdl2) of Danio rerio (Zebrafish).